Consider the following 586-residue polypeptide: Asparagine synthetase [glutamine-hydrolyzing] (586 aa).

Cys2 serves as the catalytic For GATase activity. The region spanning 2–185 (CGILAVLGVV…PGHLYSSKTG (184 aa)) is the Glutamine amidotransferase type-2 domain. Residues 50–54 (RLAII), 75–77 (NGE), and Asp98 contribute to the L-glutamine site. The region spanning 193–516 (PPWFSETVPS…PQDSARETVP (324 aa)) is the Asparagine synthetase domain. ATP contacts are provided by residues Leu231, Ile267, and 341–342 (SG).

The enzyme catalyses L-aspartate + L-glutamine + ATP + H2O = L-asparagine + L-glutamate + AMP + diphosphate + H(+). It participates in amino-acid biosynthesis; L-asparagine biosynthesis; L-asparagine from L-aspartate (L-Gln route): step 1/1. In terms of biological role, essential for nitrogen assimilation, distribution and remobilization within the plant via the phloem. The chain is Asparagine synthetase [glutamine-hydrolyzing] (ASN1) from Zea mays (Maize).